The sequence spans 366 residues: UDP-N-acetylglucosamine--N-acetylmuramyl-(pentapeptide) pyrophosphoryl-undecaprenol N-acetylglucosamine transferase (366 aa).

UDP-N-acetyl-alpha-D-glucosamine is bound by residues 10-12 (TGG), asparagine 124, arginine 165, serine 195, isoleucine 250, and glutamine 295.

Belongs to the glycosyltransferase 28 family. MurG subfamily.

The protein resides in the cell inner membrane. The catalysed reaction is di-trans,octa-cis-undecaprenyl diphospho-N-acetyl-alpha-D-muramoyl-L-alanyl-D-glutamyl-meso-2,6-diaminopimeloyl-D-alanyl-D-alanine + UDP-N-acetyl-alpha-D-glucosamine = di-trans,octa-cis-undecaprenyl diphospho-[N-acetyl-alpha-D-glucosaminyl-(1-&gt;4)]-N-acetyl-alpha-D-muramoyl-L-alanyl-D-glutamyl-meso-2,6-diaminopimeloyl-D-alanyl-D-alanine + UDP + H(+). Its pathway is cell wall biogenesis; peptidoglycan biosynthesis. Functionally, cell wall formation. Catalyzes the transfer of a GlcNAc subunit on undecaprenyl-pyrophosphoryl-MurNAc-pentapeptide (lipid intermediate I) to form undecaprenyl-pyrophosphoryl-MurNAc-(pentapeptide)GlcNAc (lipid intermediate II). The polypeptide is UDP-N-acetylglucosamine--N-acetylmuramyl-(pentapeptide) pyrophosphoryl-undecaprenol N-acetylglucosamine transferase (Thermodesulfovibrio yellowstonii (strain ATCC 51303 / DSM 11347 / YP87)).